The chain runs to 286 residues: Pyridoxal kinase PdxY (286 aa).

Substrate is bound by residues serine 9 and 44–45 (TQ). Residues aspartate 111, glutamate 148, and lysine 181 each contribute to the ATP site. Aspartate 222 contacts substrate.

Belongs to the pyridoxine kinase family. PdxY subfamily. As to quaternary structure, homodimer. Mg(2+) serves as cofactor.

The enzyme catalyses pyridoxal + ATP = pyridoxal 5'-phosphate + ADP + H(+). The protein operates within cofactor metabolism; pyridoxal 5'-phosphate salvage; pyridoxal 5'-phosphate from pyridoxal: step 1/1. Its function is as follows. Pyridoxal kinase involved in the salvage pathway of pyridoxal 5'-phosphate (PLP). Catalyzes the phosphorylation of pyridoxal to PLP. This Actinobacillus succinogenes (strain ATCC 55618 / DSM 22257 / CCUG 43843 / 130Z) protein is Pyridoxal kinase PdxY.